A 186-amino-acid chain; its full sequence is GTP cyclohydrolase 1 1 (186 aa).

The protein belongs to the GTP cyclohydrolase I family. In terms of assembly, homomer.

It catalyses the reaction GTP + H2O = 7,8-dihydroneopterin 3'-triphosphate + formate + H(+). It functions in the pathway cofactor biosynthesis; 7,8-dihydroneopterin triphosphate biosynthesis; 7,8-dihydroneopterin triphosphate from GTP: step 1/1. The polypeptide is GTP cyclohydrolase 1 1 (folE1) (Pseudomonas aeruginosa (strain ATCC 15692 / DSM 22644 / CIP 104116 / JCM 14847 / LMG 12228 / 1C / PRS 101 / PAO1)).